We begin with the raw amino-acid sequence, 317 residues long: MPMQGAQRRLLGSLNSTPTATPNLGLAANHTGAPCLEVSIPDGLFLSLGLVSLVENVLVVAAIAKNRNLHSPMYCFICCLALSDLLVSGSNMLEMAVILLLEAGALATRASVVQQLQNTIDVLTCSSMLCSLCFLGAIAVDRYVSIFYALRYHSIVTLPRARRAIAAIWVASVLSSTLFIAYCDHAAVLLCLVVFFLAMLVLMAVLYVHMLARACQHAQGITRLHKRQLPAHQGFGLRGAATLTILLGIFFLCWGPFFLHLMLVVLCPQHLTCSCIFKNFKVFLTLIICNTIIDPLIYAFRSQELCRTLREVLLCSW.

The Extracellular portion of the chain corresponds to 1 to 37; sequence MPMQGAQRRLLGSLNSTPTATPNLGLAANHTGAPCLE. N29 is a glycosylation site (N-linked (GlcNAc...) asparagine). Residues 38-63 traverse the membrane as a helical segment; the sequence is VSIPDGLFLSLGLVSLVENVLVVAAI. Residues 64 to 72 are Cytoplasmic-facing; sequence AKNRNLHSP. Residues 73-93 traverse the membrane as a helical segment; it reads MYCFICCLALSDLLVSGSNML. Residues 94 to 118 are Extracellular-facing; that stretch reads EMAVILLLEAGALATRASVVQQLQN. A helical membrane pass occupies residues 119–140; sequence TIDVLTCSSMLCSLCFLGAIAV. The Cytoplasmic segment spans residues 141–163; that stretch reads DRYVSIFYALRYHSIVTLPRARR. Residues 164 to 183 form a helical membrane-spanning segment; the sequence is AIAAIWVASVLSSTLFIAYC. The Extracellular portion of the chain corresponds to 184-191; that stretch reads DHAAVLLC. A helical transmembrane segment spans residues 192–211; it reads LVVFFLAMLVLMAVLYVHML. Residues 212–240 are Cytoplasmic-facing; that stretch reads ARACQHAQGITRLHKRQLPAHQGFGLRGA. A helical transmembrane segment spans residues 241 to 266; sequence ATLTILLGIFFLCWGPFFLHLMLVVL. Residues 267 to 279 are Extracellular-facing; it reads CPQHLTCSCIFKN. A helical transmembrane segment spans residues 280–300; it reads FKVFLTLIICNTIIDPLIYAF. The Cytoplasmic portion of the chain corresponds to 301-317; sequence RSQELCRTLREVLLCSW. A lipid anchor (S-palmitoyl cysteine) is attached at C315.

The protein belongs to the G-protein coupled receptor 1 family. In terms of assembly, interacts with MGRN1, but does not undergo MGRN1-mediated ubiquitination; this interaction competes with GNAS-binding and thus inhibits agonist-induced cAMP production. Interacts with OPN3; the interaction results in a decrease in MC1R-mediated cAMP signaling and ultimately a decrease in melanin production in melanocytes.

It is found in the cell membrane. In terms of biological role, receptor for MSH (alpha, beta and gamma) and ACTH. The activity of this receptor is mediated by G proteins which activate adenylate cyclase. Mediates melanogenesis, the production of eumelanin (black/brown) and phaeomelanin (red/yellow), via regulation of cAMP signaling in melanocytes. The sequence is that of Melanocyte-stimulating hormone receptor (MC1R) from Alouatta pigra (Guatemalan howler monkey).